We begin with the raw amino-acid sequence, 65 residues long: Putative antitoxin PF2058 (65 aa).

Belongs to the UPF0165 family.

Its function is as follows. Possibly the antitoxin component of a type II toxin-antitoxin (TA) system. The polypeptide is Putative antitoxin PF2058 (Pyrococcus furiosus (strain ATCC 43587 / DSM 3638 / JCM 8422 / Vc1)).